The chain runs to 428 residues: Aspartate--tRNA(Asp) ligase (428 aa).

An L-aspartate-binding site is contributed by Glu-166. Positions 188-191 (QLYK) are aspartate. Residue Arg-210 participates in L-aspartate binding. Residues 210–212 (RAE), 218–220 (RHL), and Glu-351 contribute to the ATP site. Residues Glu-351 and Ser-354 each coordinate Mg(2+). 2 residues coordinate L-aspartate: Ser-354 and Arg-358. Residue 399–402 (GLER) participates in ATP binding.

It belongs to the class-II aminoacyl-tRNA synthetase family. Type 2 subfamily. In terms of assembly, homodimer. Mg(2+) is required as a cofactor.

It localises to the cytoplasm. It carries out the reaction tRNA(Asp) + L-aspartate + ATP = L-aspartyl-tRNA(Asp) + AMP + diphosphate. Catalyzes the attachment of L-aspartate to tRNA(Asp) in a two-step reaction: L-aspartate is first activated by ATP to form Asp-AMP and then transferred to the acceptor end of tRNA(Asp). This is Aspartate--tRNA(Asp) ligase from Thermoplasma acidophilum (strain ATCC 25905 / DSM 1728 / JCM 9062 / NBRC 15155 / AMRC-C165).